A 249-amino-acid polypeptide reads, in one-letter code: MADS-box transcription factor 7 (249 aa).

The region spanning 1-61 (MGRGRVELKR…GKLYEFCSTQ (61 aa)) is the MADS-box domain. The region spanning 90-180 (LKASRNEYLK…RRKLEESNHV (91 aa)) is the K-box domain.

May interact with the K-box of MADS6. May interact with MADS13 and MADS18. As to expression, expressed in lodicules, stamens and carpels.

It is found in the nucleus. Probable transcription factor. May be involved in the control of flowering time. The chain is MADS-box transcription factor 7 (MADS7) from Oryza sativa subsp. japonica (Rice).